The primary structure comprises 204 residues: FMN-dependent NADH:quinone oxidoreductase 1 (204 aa).

FMN-binding positions include serine 10 and 15–17; that span reads SLS.

The protein belongs to the azoreductase type 1 family. In terms of assembly, homodimer. It depends on FMN as a cofactor.

It catalyses the reaction 2 a quinone + NADH + H(+) = 2 a 1,4-benzosemiquinone + NAD(+). The enzyme catalyses N,N-dimethyl-1,4-phenylenediamine + anthranilate + 2 NAD(+) = 2-(4-dimethylaminophenyl)diazenylbenzoate + 2 NADH + 2 H(+). Functionally, quinone reductase that provides resistance to thiol-specific stress caused by electrophilic quinones. In terms of biological role, also exhibits azoreductase activity. Catalyzes the reductive cleavage of the azo bond in aromatic azo compounds to the corresponding amines. This chain is FMN-dependent NADH:quinone oxidoreductase 1, found in Rhizobium etli (strain ATCC 51251 / DSM 11541 / JCM 21823 / NBRC 15573 / CFN 42).